Here is a 130-residue protein sequence, read N- to C-terminus: 3-aminoacrylate deaminase RutC (130 aa).

This sequence belongs to the RutC family.

It catalyses the reaction (Z)-3-aminoacrylate + H2O + H(+) = 3-oxopropanoate + NH4(+). Functionally, involved in pyrimidine catabolism. Catalyzes the deamination of 3-aminoacrylate to malonic semialdehyde, a reaction that can also occur spontaneously. RutC may facilitate the reaction and modulate the metabolic fitness, rather than catalyzing essential functions. The sequence is that of 3-aminoacrylate deaminase RutC from Haliangium ochraceum (strain DSM 14365 / JCM 11303 / SMP-2).